A 148-amino-acid polypeptide reads, in one-letter code: Aspartate carbamoyltransferase regulatory chain (148 aa).

The Zn(2+) site is built by C106, C111, C134, and C137.

It belongs to the PyrI family. In terms of assembly, contains catalytic and regulatory chains. The cofactor is Zn(2+).

Functionally, involved in allosteric regulation of aspartate carbamoyltransferase. This Methanococcus maripaludis (strain DSM 14266 / JCM 13030 / NBRC 101832 / S2 / LL) protein is Aspartate carbamoyltransferase regulatory chain.